Reading from the N-terminus, the 342-residue chain is MTDRNELIGVAIRVVAAAAVSFLSVRYLVKYLDPNYSVNEESKKKVAQLFHELGIDRQIELSEHEIRIATQFVGGEDVGADWDEIGGCEELVAELKDRIILPLRFASQSGSHLLSPPRGILLYGPPGCGKTLLAKAVARAAGCRFINLQVSNLTDKWYGESQKLAAAVFSVAQKFQPTIIFIDEIDSFLRDRQSHDHESTAMMKAQFMTLWDGFSSSGDQIIVMGATNRPRDVDAAILRRMTARFQVPVPNAKQRSQILNVILRNEKINNTVNLGEIAQAAEGLSGSDLKEVCRLALLARAKATVASGGSVNQLLPLEQSDFESAVHKYMRAAHLLVEETLD.

Residues 1–6 (MTDRNE) are Mitochondrial intermembrane-facing. The helical transmembrane segment at 7-25 (LIGVAIRVVAAAAVSFLSV) threads the bilayer. Topologically, residues 26 to 342 (RYLVKYLDPN…AHLLVEETLD (317 aa)) are cytoplasmic. 124–131 (GPPGCGKT) is a binding site for ATP.

It belongs to the AAA ATPase family.

Its subcellular location is the mitochondrion outer membrane. Involved in intramitochondrial sorting of proteins. The chain is Mitochondrial sorting homolog (mspn-1) from Caenorhabditis elegans.